The chain runs to 186 residues: Large ribosomal subunit protein uL22 (186 aa).

A disordered region spans residues 160–186 (AAENEPAKKKLSKKKLQRQKEKMMRNE). Over residues 177-186 (RQKEKMMRNE) the composition is skewed to basic and acidic residues.

Belongs to the universal ribosomal protein uL22 family.

The sequence is that of Large ribosomal subunit protein uL22 (RpL17) from Aedes aegypti (Yellowfever mosquito).